An 82-amino-acid chain; its full sequence is DNA gyrase inhibitor YacG (82 aa).

Zn(2+) is bound by residues cysteine 9, cysteine 12, cysteine 27, and cysteine 31. The interval isoleucine 44–glutamate 82 is disordered. Basic and acidic residues predominate over residues arginine 72–glutamate 82.

This sequence belongs to the DNA gyrase inhibitor YacG family. In terms of assembly, interacts with GyrB. It depends on Zn(2+) as a cofactor.

Functionally, inhibits all the catalytic activities of DNA gyrase by preventing its interaction with DNA. Acts by binding directly to the C-terminal domain of GyrB, which probably disrupts DNA binding by the gyrase. The chain is DNA gyrase inhibitor YacG from Rhodopirellula baltica (strain DSM 10527 / NCIMB 13988 / SH1).